A 494-amino-acid polypeptide reads, in one-letter code: Alpha-amylase A (494 aa).

Residues 1–18 (MFLAKSLVCLALLAVANA) form the signal peptide. Q19 carries the post-translational modification Pyrrolidone carboxylic acid. A disulfide bond links C46 and C102. Positions 116, 165, and 174 each coordinate Ca(2+). C153 and C167 form a disulfide bridge. A chloride-binding site is contributed by R202. D204 functions as the Nucleophile in the catalytic mechanism. H208 contributes to the Ca(2+) binding site. E241 (proton donor) is an active-site residue. Chloride-binding residues include N304 and R343. 2 cysteine pairs are disulfide-bonded: C376–C382 and C448–C460.

Belongs to the glycosyl hydrolase 13 family. In terms of assembly, monomer. Ca(2+) serves as cofactor. Requires chloride as cofactor.

It catalyses the reaction Endohydrolysis of (1-&gt;4)-alpha-D-glucosidic linkages in polysaccharides containing three or more (1-&gt;4)-alpha-linked D-glucose units.. The sequence is that of Alpha-amylase A (Amy-d) from Drosophila mauritiana (Fruit fly).